The following is a 585-amino-acid chain: YTH domain-containing family protein 3 (585 aa).

3 disordered regions span residues 1 to 52 (MSAT…YPPM), 243 to 277 (RKPAKPQPKLKPKGNVGIGGSAVPPPPIKHNMNIG), and 304 to 351 (PQPL…QQLQ). S2 is subject to N-acetylserine. The segment covering 15–24 (NKVSVQNGSI) has biased composition (polar residues). Residue S23 is modified to Phosphoserine. A compositionally biased stretch (basic residues) spans 244–254 (KPAKPQPKLKP). Residues 329–351 (QQQQGPQPQAQPHQVQPQQQQLQ) show a composition bias toward low complexity. The 135-residue stretch at 416-550 (GRVFIIKSYS…EKAKQVLKII (135 aa)) folds into the YTH domain. RNA contacts are provided by residues 422–424 (KSY), D428, 438–439 (WC), N468, W492, and W497.

The protein belongs to the YTHDF family. YTHDF3 subfamily. In terms of assembly, interacts with CNOT1; promoting recruitment of the CCR4-NOT complex. Interacts with YTHDF1. Interacts with YTHDF2. Interacts with PAN3. Post-translationally, (Microbial infection) Proteolytically cleaved by HIV-1 protease when incorporated into HIV-1 particles in a nucleocapsid-dependent-manner. Cleavage by HIV-1 protease probably ensures optimal infectivity of the mature virion.

It localises to the cytoplasm. The protein localises to the cytosol. Its subcellular location is the P-body. It is found in the stress granule. In terms of biological role, specifically recognizes and binds N6-methyladenosine (m6A)-containing RNAs, and regulates their stability. M6A is a modification present at internal sites of mRNAs and some non-coding RNAs and plays a role in mRNA stability and processing. Acts as a regulator of mRNA stability by promoting degradation of m6A-containing mRNAs via interaction with the CCR4-NOT complex or PAN3. The YTHDF paralogs (YTHDF1, YTHDF2 and YTHDF3) share m6A-containing mRNAs targets and act redundantly to mediate mRNA degradation and cellular differentiation. Acts as a negative regulator of type I interferon response by down-regulating interferon-stimulated genes (ISGs) expression: acts by binding to FOXO3 mRNAs. Binds to FOXO3 mRNAs independently of METTL3-mediated m6A modification. Can also act as a regulator of mRNA stability in cooperation with YTHDF2 by binding to m6A-containing mRNA and promoting their degradation. Recognizes and binds m6A-containing circular RNAs (circRNAs); circRNAs are generated through back-splicing of pre-mRNAs, a non-canonical splicing process promoted by dsRNA structures across circularizing exons. Promotes formation of phase-separated membraneless compartments, such as P-bodies or stress granules, by undergoing liquid-liquid phase separation upon binding to mRNAs containing multiple m6A-modified residues: polymethylated mRNAs act as a multivalent scaffold for the binding of YTHDF proteins, juxtaposing their disordered regions and thereby leading to phase separation. The resulting mRNA-YTHDF complexes then partition into different endogenous phase-separated membraneless compartments, such as P-bodies, stress granules or neuronal RNA granules. May also recognize and bind N1-methyladenosine (m1A)-containing mRNAs: inhibits trophoblast invasion by binding to m1A-methylated transcripts of IGF1R, promoting their degradation. Functionally, has some antiviral activity against HIV-1 virus: incorporated into HIV-1 particles in a nucleocapsid-dependent manner and reduces viral infectivity in the next cycle of infection. May interfere with this early step of the viral life cycle by binding to N6-methyladenosine (m6A) modified sites on the HIV-1 RNA genome. The polypeptide is YTH domain-containing family protein 3 (Homo sapiens (Human)).